Reading from the N-terminus, the 479-residue chain is MMSGVQPVAVYALRVPADGALVPAVPDAAAMFRVSMAAIDPDEAPEFDDDSSRRPRATLRIIRAPPGLDEEDSDDDYEDEDDSEDDSEDDEEVNGGPSDKEKARKLKEAAYLKELEDAMSEDDESDEGEEFDLKAAISKLVKGKAPATDDDDEDAESDEGLDLDEMVVCTLDPERNYQQPLDITVAEGERVFFKVTGTHTIYLTGNYVMPIDEPRDDYDEDDDEDEEDYDLSPDEDELDMDELMMGEDDESDDLDGLENPRITEIDTDEEEAPKLVDAKGKKKRGADEAALEAKDDKAKSAANGESKKQQKKLKKNNGEASAVEAKPEQKETKKVQFAKNLEQGPTPSKERKPDEKKPADKAEKTTGTLGVKEVKGVIIDDKKLGKGPAAASGNTVAMRYIGKLENGKVFDSNKKGKPFTFKLGKGEVIKGWDIGVAGMAVGGERRITIPSHLAYGKKGVPGIPGNSKLIFDVKLLEIK.

3 disordered regions span residues 39 to 106, 141 to 162, and 205 to 367; these read IDPD…ARKL, VKGK…EGLD, and GNYV…KTTG. Composition is skewed to acidic residues over residues 40–49, 68–93, 148–162, and 214–256; these read DPDEAPEFDD, LDEE…DEEV, TDDD…EGLD, and PRDD…DLDG. Composition is skewed to basic and acidic residues over residues 272 to 299, 325 to 334, and 348 to 364; these read APKL…DKAK, AKPEQKETKK, and SKER…KAEK. The PPIase FKBP-type domain occupies 393 to 479; the sequence is GNTVAMRYIG…IFDVKLLEIK (87 aa).

Belongs to the FKBP-type PPIase family. FKBP3/4 subfamily. In terms of assembly, binds to histones H3 and H4.

Its subcellular location is the nucleus. It carries out the reaction [protein]-peptidylproline (omega=180) = [protein]-peptidylproline (omega=0). Inhibited by both FK506 and rapamycin. In terms of biological role, PPIase that acts as a histone chaperone. Histone proline isomerase that increases the rate of cis-trans isomerization at prolines on the histone H3 N-terminal tail. Proline isomerization influences H3 methylation thereby regulating gene expression. The protein is FK506-binding protein 4 (fpr4) of Emericella nidulans (strain FGSC A4 / ATCC 38163 / CBS 112.46 / NRRL 194 / M139) (Aspergillus nidulans).